Consider the following 238-residue polypeptide: Probable xyloglucan-specific endo-beta-1,4-glucanase A (238 aa).

An N-terminal signal peptide occupies residues 1-18; that stretch reads MKLSLSVALSLAASTAQA. N-linked (GlcNAc...) asparagine glycans are attached at residues N106 and N171.

It belongs to the glycosyl hydrolase 12 (cellulase H) family.

Its subcellular location is the secreted. The enzyme catalyses xyloglucan + H2O = xyloglucan oligosaccharides.. Functionally, catalyzes endohydrolysis of 1,4-beta-D-glucosidic linkages in xyloglucan with retention of the beta-configuration of the glycosyl residues. Specific for xyloglucan and does not hydrolyze other cell wall components. The protein is Probable xyloglucan-specific endo-beta-1,4-glucanase A (xgeA) of Aspergillus fumigatus (strain ATCC MYA-4609 / CBS 101355 / FGSC A1100 / Af293) (Neosartorya fumigata).